A 157-amino-acid chain; its full sequence is 6,7-dimethyl-8-ribityllumazine synthase 1 (157 aa).

Residues phenylalanine 22, alanine 53–glutamate 55, and threonine 82–isoleucine 84 contribute to the 5-amino-6-(D-ribitylamino)uracil site. Residue glutamate 87 to threonine 88 participates in (2S)-2-hydroxy-3-oxobutyl phosphate binding. Histidine 90 acts as the Proton donor in catalysis. Asparagine 115 is a 5-amino-6-(D-ribitylamino)uracil binding site. Arginine 129 contributes to the (2S)-2-hydroxy-3-oxobutyl phosphate binding site.

The protein belongs to the DMRL synthase family.

It carries out the reaction (2S)-2-hydroxy-3-oxobutyl phosphate + 5-amino-6-(D-ribitylamino)uracil = 6,7-dimethyl-8-(1-D-ribityl)lumazine + phosphate + 2 H2O + H(+). The protein operates within cofactor biosynthesis; riboflavin biosynthesis; riboflavin from 2-hydroxy-3-oxobutyl phosphate and 5-amino-6-(D-ribitylamino)uracil: step 1/2. Its function is as follows. Catalyzes the formation of 6,7-dimethyl-8-ribityllumazine by condensation of 5-amino-6-(D-ribitylamino)uracil with 3,4-dihydroxy-2-butanone 4-phosphate. This is the penultimate step in the biosynthesis of riboflavin. In Brucella suis biovar 1 (strain 1330), this protein is 6,7-dimethyl-8-ribityllumazine synthase 1.